A 385-amino-acid polypeptide reads, in one-letter code: Protein pelota homolog (385 aa).

Residue lysine 162 forms a Glycyl lysine isopeptide (Lys-Gly) (interchain with G-Cter in SUMO2) linkage. A phosphoserine mark is found at serine 374, serine 380, serine 381, and serine 382.

It belongs to the eukaryotic release factor 1 family. Pelota subfamily. Component of the Pelota-HBS1L complex, also named Dom34-Hbs1 complex, composed of PELO and HBS1L. Interacts with PINK1. Interacts with ABCE1. Interacts with CNOT4. The cofactor is a divalent metal cation. In terms of tissue distribution, ubiquitously expressed.

The protein localises to the cytoplasm. Functionally, component of the Pelota-HBS1L complex, a complex that recognizes stalled ribosomes and triggers the No-Go Decay (NGD) pathway. In the Pelota-HBS1L complex, PELO recognizes ribosomes stalled at the 3' end of an mRNA and engages stalled ribosomes by destabilizing mRNA in the mRNA channel. Following mRNA extraction from stalled ribosomes by the SKI complex, the Pelota-HBS1L complex promotes recruitment of ABCE1, which drives the disassembly of stalled ribosomes, followed by degradation of damaged mRNAs as part of the NGD pathway. As part of the PINK1-regulated signaling, upon mitochondrial damage is recruited to the ribosome/mRNA-ribonucleoprotein complex associated to mitochondrial outer membrane thereby enabling the recruitment of autophagy receptors and induction of mitophagy. This Mus musculus (Mouse) protein is Protein pelota homolog.